Consider the following 279-residue polypeptide: HTH-type transcriptional regulator HdfR (279 aa).

In terms of domain architecture, HTH lysR-type spans methionine 1–threonine 58. Positions phenylalanine 18 to arginine 37 form a DNA-binding region, H-T-H motif.

The protein belongs to the LysR transcriptional regulatory family.

Its function is as follows. Negatively regulates the transcription of the flagellar master operon flhDC by binding to the upstream region of the operon. The polypeptide is HTH-type transcriptional regulator HdfR (Escherichia coli O17:K52:H18 (strain UMN026 / ExPEC)).